A 500-amino-acid chain; its full sequence is Na(+)/H(+) antiporter NhaB (500 aa).

A run of 13 helical transmembrane segments spans residues 11 to 31 (HGFLGQSPLWYKAIICLFLVL), 34 to 54 (LLLVTVGPVAAGWALVLEFIF), 58 to 78 (MALKCYPLMPGGLLLVEALLL), 96 to 116 (VILLLMFMVAGIHFMKELLLF), 129 to 149 (AILSLLFCVLSAFLSAFLDAL), 150 to 170 (TVTAVIISAAVGFYAVYHRVA), 205 to 225 (LLMHGAVGTALGGVCTLVGEP), 241 to 261 (FFFKVAPVSLPVLGAGLLTCV), 311 to 331 (ILIICLGLHVAEVGLIGLMVI), 350 to 370 (FQDAMPFTSLLVVFFAVVAVI), 394 to 414 (MLYLANGLLSAISDNVFVATI), 450 to 470 (ATPNGQAAFLFLLTSAIAPLI), and 477 to 497 (MVWMALPYTVVMGGLGWWAVT).

It belongs to the NhaB Na(+)/H(+) (TC 2.A.34) antiporter family.

Its subcellular location is the cell inner membrane. It catalyses the reaction 2 Na(+)(in) + 3 H(+)(out) = 2 Na(+)(out) + 3 H(+)(in). Its function is as follows. Na(+)/H(+) antiporter that extrudes sodium in exchange for external protons. The chain is Na(+)/H(+) antiporter NhaB from Pseudomonas putida (strain GB-1).